A 556-amino-acid chain; its full sequence is ATP synthase subunit beta-2, mitochondrial (556 aa).

Low complexity predominate over residues 1 to 20 (MASRRVLSSLLRSSSGRSAA). Positions 1 to 37 (MASRRVLSSLLRSSSGRSAAKLVNRNPRLPSPSPARH) are disordered. The transit peptide at 1 to 51 (MASRRVLSSLLRSSSGRSAAKLVNRNPRLPSPSPARHAAPCSYLLGRVAEY) directs the protein to the mitochondrion. The residue at position 59 (serine 59) is a Phosphoserine. An ATP-binding site is contributed by 231 to 238 (GGAGVGKT).

Belongs to the ATPase alpha/beta chains family. As to quaternary structure, F-type ATPases have 2 components, CF(1) - the catalytic core - and CF(0) - the membrane proton channel. CF(1) has five subunits: alpha(3), beta(3), gamma(1), delta(1), epsilon(1). CF(0) has three main subunits: a, b and c.

The protein resides in the mitochondrion. It is found in the mitochondrion inner membrane. The enzyme catalyses ATP + H2O + 4 H(+)(in) = ADP + phosphate + 5 H(+)(out). In terms of biological role, mitochondrial membrane ATP synthase (F(1)F(0) ATP synthase or Complex V) produces ATP from ADP in the presence of a proton gradient across the membrane which is generated by electron transport complexes of the respiratory chain. F-type ATPases consist of two structural domains, F(1) - containing the extramembraneous catalytic core, and F(0) - containing the membrane proton channel, linked together by a central stalk and a peripheral stalk. During catalysis, ATP synthesis in the catalytic domain of F(1) is coupled via a rotary mechanism of the central stalk subunits to proton translocation. Subunits alpha and beta form the catalytic core in F(1). Rotation of the central stalk against the surrounding alpha(3)beta(3) subunits leads to hydrolysis of ATP in three separate catalytic sites on the beta subunits. The polypeptide is ATP synthase subunit beta-2, mitochondrial (Arabidopsis thaliana (Mouse-ear cress)).